Reading from the N-terminus, the 1544-residue chain is Zinc finger protein GLI2 (1544 aa).

The tract at residues Met-1–Pro-26 is disordered. Phosphoserine is present on residues Ser-145, Ser-230, Ser-232, and Ser-238. Residues Ser-338–Asn-364 are disordered. Ser-385 is modified (phosphoserine; by DYRK2). The C2H2-type 1 zinc-finger motif lies at Thr-417–His-444. A C2H2-type 2; degenerate zinc finger spans residues Gln-455–His-477. 3 consecutive C2H2-type zinc fingers follow at residues His-483–His-507, Tyr-513–His-538, and Tyr-544–His-569. Disordered stretches follow at residues Asp-557–Thr-619 and Gly-635–Asp-682. The span at His-569–Val-585 shows a compositional bias: basic and acidic residues. Over residues Cys-637–Ala-657 the composition is skewed to low complexity. A Phosphoserine modification is found at Ser-707. Residue Thr-708 is modified to Phosphothreonine. Lys-740 carries the post-translational modification N6-acetyllysine; by EP300. Disordered regions lie at residues Ser-781 to Val-800, Ser-805 to Leu-861, Ala-908 to Asp-963, Val-995 to Ser-1016, Phe-1166 to Met-1220, and Gly-1422 to Thr-1457. 2 stretches are compositionally biased toward polar residues: residues Ser-790–Val-800 and Ser-805–Arg-814. Over residues Arg-954–Asp-963 the composition is skewed to basic and acidic residues. Phosphoserine; by DYRK2 is present on Ser-997. Polar residues-rich tracts occupy residues Ser-997–Ala-1009, Asn-1173–His-1190, and Ser-1200–Arg-1209.

This sequence belongs to the GLI C2H2-type zinc-finger protein family. In terms of assembly, interacts with ZIC1 and ZIC2. Interacts with STK36. Interacts with SUFU; this inhibits transcriptional activation mediated by GLI2. Interacts (via C-terminal internal region) with FOXC1 (via N-terminus); this interaction is direct and increases GLI2 DNA-binding and transcriptional activity through a smoothened (SMO)-independent Hedgehog (Hh) signaling pathway. Phosphorylated in vitro by ULK3. Phosphorylated by DYRK2; this inhibits GLI2 transcription factor activity and promotes proteasomal degradation of GLI2. In terms of processing, acetylation at Lys-740 inhibits Hh target gene expression, probably by impeding entry into chromatin thus preventing promoter occupancy.

The protein resides in the nucleus. Its subcellular location is the cytoplasm. The protein localises to the cell projection. It is found in the cilium. Its function is as follows. Functions as a transcription regulator in the hedgehog (Hh) pathway. Functions as a transcriptional activator. May also function as transcriptional repressor. Requires STK36 for full transcriptional activator activity. Binds to the DNA sequence 5'-GAACCACCCA-3' which is part of the TRE-2S regulatory element. Is involved in the smoothened (SHH) signaling pathway. Required for normal skeleton development. The sequence is that of Zinc finger protein GLI2 from Mus musculus (Mouse).